The sequence spans 389 residues: Chalcone synthase 1 (389 aa).

The active site involves C164.

The protein belongs to the thiolase-like superfamily. Chalcone/stilbene synthases family.

It carries out the reaction (E)-4-coumaroyl-CoA + 3 malonyl-CoA + 3 H(+) = 2',4,4',6'-tetrahydroxychalcone + 3 CO2 + 4 CoA. It functions in the pathway secondary metabolite biosynthesis; flavonoid biosynthesis. Functionally, the primary product of this enzyme is 4,2',4',6'-tetrahydroxychalcone (also termed naringenin-chalcone or chalcone) which can under specific conditions spontaneously isomerize into naringenin. The protein is Chalcone synthase 1 (CHS1) of Daucus carota (Wild carrot).